Reading from the N-terminus, the 280-residue chain is Release factor glutamine methyltransferase (280 aa).

Residues 120-124 (GTGSG), D143, and N186 each bind S-adenosyl-L-methionine. Residue 186–189 (NPPY) participates in substrate binding.

This sequence belongs to the protein N5-glutamine methyltransferase family. PrmC subfamily.

The enzyme catalyses L-glutaminyl-[peptide chain release factor] + S-adenosyl-L-methionine = N(5)-methyl-L-glutaminyl-[peptide chain release factor] + S-adenosyl-L-homocysteine + H(+). In terms of biological role, methylates the class 1 translation termination release factors RF1/PrfA and RF2/PrfB on the glutamine residue of the universally conserved GGQ motif. This chain is Release factor glutamine methyltransferase, found in Koribacter versatilis (strain Ellin345).